A 404-amino-acid polypeptide reads, in one-letter code: 4-hydroxy-3-methylbut-2-en-1-yl diphosphate synthase (ferredoxin) (404 aa).

[4Fe-4S] cluster-binding residues include cysteine 313, cysteine 316, cysteine 347, and glutamate 354.

This sequence belongs to the IspG family. Requires [4Fe-4S] cluster as cofactor.

The enzyme catalyses (2E)-4-hydroxy-3-methylbut-2-enyl diphosphate + 2 oxidized [2Fe-2S]-[ferredoxin] + H2O = 2-C-methyl-D-erythritol 2,4-cyclic diphosphate + 2 reduced [2Fe-2S]-[ferredoxin] + H(+). It functions in the pathway isoprenoid biosynthesis; isopentenyl diphosphate biosynthesis via DXP pathway; isopentenyl diphosphate from 1-deoxy-D-xylulose 5-phosphate: step 5/6. Converts 2C-methyl-D-erythritol 2,4-cyclodiphosphate (ME-2,4cPP) into 1-hydroxy-2-methyl-2-(E)-butenyl 4-diphosphate. The sequence is that of 4-hydroxy-3-methylbut-2-en-1-yl diphosphate synthase (ferredoxin) from Crocosphaera subtropica (strain ATCC 51142 / BH68) (Cyanothece sp. (strain ATCC 51142)).